Consider the following 472-residue polypeptide: Putative diacyglycerol O-acyltransferase MT3172 (472 aa).

Residue His139 is the Proton acceptor of the active site. The tract at residues Asp217–Ser238 is disordered.

Belongs to the long-chain O-acyltransferase family.

It catalyses the reaction an acyl-CoA + a 1,2-diacyl-sn-glycerol = a triacyl-sn-glycerol + CoA. Its pathway is glycerolipid metabolism; triacylglycerol biosynthesis. The sequence is that of Putative diacyglycerol O-acyltransferase MT3172 from Mycobacterium tuberculosis (strain CDC 1551 / Oshkosh).